Here is a 357-residue protein sequence, read N- to C-terminus: 3-dehydroquinate synthase (357 aa).

Residues 104-108, 128-129, Lys141, and 168-171 each bind NAD(+); these read GVVGD, TT, and FLET. Zn(2+) is bound by residues Glu183, His243, and His260.

It belongs to the sugar phosphate cyclases superfamily. Dehydroquinate synthase family. The cofactor is NAD(+). Co(2+) is required as a cofactor. Zn(2+) serves as cofactor.

The protein localises to the cytoplasm. The enzyme catalyses 7-phospho-2-dehydro-3-deoxy-D-arabino-heptonate = 3-dehydroquinate + phosphate. The protein operates within metabolic intermediate biosynthesis; chorismate biosynthesis; chorismate from D-erythrose 4-phosphate and phosphoenolpyruvate: step 2/7. Catalyzes the conversion of 3-deoxy-D-arabino-heptulosonate 7-phosphate (DAHP) to dehydroquinate (DHQ). This chain is 3-dehydroquinate synthase, found in Streptococcus pyogenes serotype M3 (strain ATCC BAA-595 / MGAS315).